The sequence spans 284 residues: Zinc finger protein ZAT3 (284 aa).

Basic and acidic residues predominate over residues 1 to 12 (MNNNHSYDDRSF). Residues 1-76 (MNNNHSYDDR…KPDPNAPKIT (76 aa)) are disordered. Polar residues predominate over residues 18–37 (PSNTSNPNPNLQFALSSSYD). Low complexity predominate over residues 47-62 (TVASSSSSSPKSASKP). 3 C2H2-type zinc fingers span residues 77-99 (RPCT…MRCH), 162-184 (FECG…RASH), and 222-244 (HKCN…MRCH).

As to quaternary structure, interacts (via the EAR motif) with TPL. In terms of tissue distribution, expressed exclusively in pollen.

It is found in the nucleus. Functionally, mediates the regulation of male germ cell division by DUO1. In Arabidopsis thaliana (Mouse-ear cress), this protein is Zinc finger protein ZAT3.